Here is a 153-residue protein sequence, read N- to C-terminus: Peptide deformylase (153 aa).

Fe cation contacts are provided by Cys87 and His129. Glu130 is an active-site residue. Residue His133 coordinates Fe cation.

Belongs to the polypeptide deformylase family. Fe(2+) is required as a cofactor.

The enzyme catalyses N-terminal N-formyl-L-methionyl-[peptide] + H2O = N-terminal L-methionyl-[peptide] + formate. Its function is as follows. Removes the formyl group from the N-terminal Met of newly synthesized proteins. Requires at least a dipeptide for an efficient rate of reaction. N-terminal L-methionine is a prerequisite for activity but the enzyme has broad specificity at other positions. This Dictyoglomus thermophilum (strain ATCC 35947 / DSM 3960 / H-6-12) protein is Peptide deformylase.